A 187-amino-acid chain; its full sequence is Calcium and integrin-binding family member 2 (187 aa).

3 EF-hand domains span residues Arg-66–Ser-101, Pro-103–Ser-138, and Glu-144–Phe-179. Ca(2+) is bound by residues Asp-116, Asn-118, Asp-120, Asp-127, Asp-157, Asp-159, Asp-161, Lys-163, and Asp-168.

Monomer. Homodimer. Interacts with WHRN and MYO7A. Interacts with ITGA2B (via C-terminus cytoplasmic tail region); the interactions are stabilized/increased in a calcium and magnesium-dependent manner. Interacts with ITGA7 (via C-terminus cytoplasmic tail region); the interactions are stabilized/increased in a calcium and magnesium-dependent manner. Interacts with TMC1. Interacts with TMC2.

Its subcellular location is the cytoplasm. The protein localises to the cell projection. The protein resides in the stereocilium. It is found in the photoreceptor inner segment. It localises to the cilium. Its subcellular location is the photoreceptor outer segment. The protein localises to the cell membrane. The protein resides in the sarcolemma. In terms of biological role, calcium- and integrin-binding protein that plays a role in intracellular calcium homeostasis. Acts as an auxiliary subunit of the sensory mechanoelectrical transduction (MET) channel in hair cells. Essential for mechanoelectrical transduction (MET) currents in auditory hair cells and thereby required for hearing. Regulates the function of hair cell mechanotransduction by controlling the distribution of transmembrane channel-like proteins TMC1 and TMC2, and by regulating the function of the MET channels in hair cells. Required for the maintenance of auditory hair cell stereocilia bundle morphology and function and for hair-cell survival in the cochlea. Critical for proper photoreceptor cell maintenance and function. Plays a role in intracellular calcium homeostasis by decreasing ATP-induced calcium release. The protein is Calcium and integrin-binding family member 2 (Cib2) of Rattus norvegicus (Rat).